A 268-amino-acid chain; its full sequence is Indole-3-glycerol phosphate synthase (268 aa).

It belongs to the TrpC family.

It carries out the reaction 1-(2-carboxyphenylamino)-1-deoxy-D-ribulose 5-phosphate + H(+) = (1S,2R)-1-C-(indol-3-yl)glycerol 3-phosphate + CO2 + H2O. It functions in the pathway amino-acid biosynthesis; L-tryptophan biosynthesis; L-tryptophan from chorismate: step 4/5. In Acinetobacter baumannii (strain SDF), this protein is Indole-3-glycerol phosphate synthase.